A 254-amino-acid chain; its full sequence is NAD-dependent protein deacylase (254 aa).

In terms of domain architecture, Deacetylase sirtuin-type spans 1 to 250 (MERLEEARKR…LPPSPEDQAE (250 aa)). Position 22 to 41 (22 to 41 (GAGISKPSGIPTFRDAEGLW)) interacts with NAD(+). Substrate is bound by residues Y66 and R69. 104 to 107 (QNVD) is a binding site for NAD(+). H122 functions as the Proton acceptor in the catalytic mechanism. Zn(2+)-binding residues include C130, C133, C149, and C152. Residues 189–191 (GTS), 215–217 (NPE), and A233 contribute to the NAD(+) site.

The protein belongs to the sirtuin family. Class III subfamily. Requires Zn(2+) as cofactor.

The protein resides in the cytoplasm. The enzyme catalyses N(6)-acetyl-L-lysyl-[protein] + NAD(+) + H2O = 2''-O-acetyl-ADP-D-ribose + nicotinamide + L-lysyl-[protein]. The catalysed reaction is N(6)-succinyl-L-lysyl-[protein] + NAD(+) + H2O = 2''-O-succinyl-ADP-D-ribose + nicotinamide + L-lysyl-[protein]. NAD-dependent lysine deacetylase and desuccinylase that specifically removes acetyl and succinyl groups on target proteins. Modulates the activities of several proteins which are inactive in their acylated form. The polypeptide is NAD-dependent protein deacylase (Thermus thermophilus (strain ATCC 27634 / DSM 579 / HB8)).